The chain runs to 478 residues: Glutamate--tRNA ligase (478 aa).

The 'HIGH' region motif lies at 8 to 18 (PSPTGYLHLGN). The 'KMSKS' region signature appears at 248–252 (KLSKR). K251 lines the ATP pocket.

The protein belongs to the class-I aminoacyl-tRNA synthetase family. Glutamate--tRNA ligase type 1 subfamily. Monomer.

The protein resides in the cytoplasm. The catalysed reaction is tRNA(Glu) + L-glutamate + ATP = L-glutamyl-tRNA(Glu) + AMP + diphosphate. In terms of biological role, catalyzes the attachment of glutamate to tRNA(Glu) in a two-step reaction: glutamate is first activated by ATP to form Glu-AMP and then transferred to the acceptor end of tRNA(Glu). The sequence is that of Glutamate--tRNA ligase from Sulfurihydrogenibium sp. (strain YO3AOP1).